The primary structure comprises 640 residues: Protein cereblon (640 aa).

Acidic residues predominate over residues 1 to 11 (MDDEETAEIDE). Disordered regions lie at residues 1-25 (MDDE…ELGP) and 92-159 (REDP…EAVP). A compositionally biased stretch (low complexity) spans 113 to 137 (QPAQQEEQASLPYDSPSRASISSRH). Residues 278–506 (RMLIFMHQHI…IIDTTLKQES (229 aa)) form the Lon N-terminal domain. In terms of domain architecture, CULT spans 505–614 (ESLFYCRYCN…LAGSSVRIGK (110 aa)). Residues cysteine 510, cysteine 513, cysteine 579, and cysteine 582 each contribute to the Zn(2+) site.

This sequence belongs to the CRBN family. As to quaternary structure, likely a component of a DCX (DDB1-CUL4-X-box) protein ligase complex. May interact with pic/DDB1. Ubiquitinated.

It localises to the nucleus. It functions in the pathway protein modification; protein ubiquitination. In terms of biological role, substrate recognition component of a DCX (DDB1-CUL4-X-box) E3 protein ligase complex that mediates the ubiquitination and subsequent proteasomal degradation of target proteins. Has an essential role in mediating growth by negatively regulating insulin signaling. It also has a role in maintaining presynaptic function in the neuromuscular junction synapses of third-instar larvae. The protein is Protein cereblon of Drosophila virilis (Fruit fly).